A 494-amino-acid polypeptide reads, in one-letter code: Inosine-5'-monophosphate dehydrogenase (494 aa).

2 CBS domains span residues 93 to 154 and 158 to 217; these read IIRN…DEKI and MTTN…CKDS. Residues aspartate 251 and 301 to 303 contribute to the NAD(+) site; that span reads GIG. Residues glycine 303 and glycine 305 each contribute to the K(+) site. Serine 306 is a binding site for IMP. Position 308 (cysteine 308) interacts with K(+). Cysteine 308 acts as the Thioimidate intermediate in catalysis. IMP is bound by residues 341-343, 364-365, and 388-392; these read DGG, GS, and YRGMG. Arginine 406 acts as the Proton acceptor in catalysis. Position 421 (glutamate 421) interacts with IMP. Positions 475, 476, and 477 each coordinate K(+).

It belongs to the IMPDH/GMPR family. Homotetramer. It depends on K(+) as a cofactor.

It catalyses the reaction IMP + NAD(+) + H2O = XMP + NADH + H(+). It functions in the pathway purine metabolism; XMP biosynthesis via de novo pathway; XMP from IMP: step 1/1. Mycophenolic acid (MPA) is a non-competitive inhibitor that prevents formation of the closed enzyme conformation by binding to the same site as the amobile flap. In contrast, mizoribine monophosphate (MZP) is a competitive inhibitor that induces the closed conformation. MPA is a potent inhibitor of mammalian IMPDHs but a poor inhibitor of the bacterial enzymes. MZP is a more potent inhibitor of bacterial IMPDH. In terms of biological role, catalyzes the conversion of inosine 5'-phosphate (IMP) to xanthosine 5'-phosphate (XMP), the first committed and rate-limiting step in the de novo synthesis of guanine nucleotides, and therefore plays an important role in the regulation of cell growth. The chain is Inosine-5'-monophosphate dehydrogenase from Chlorobaculum tepidum (strain ATCC 49652 / DSM 12025 / NBRC 103806 / TLS) (Chlorobium tepidum).